The sequence spans 291 residues: Ecto-ADP-ribosyltransferase 5 (291 aa).

Positions 1 to 22 (MALAALMIALGSLGLHTWQAQA) are cleaved as a signal peptide. Cys42 and Cys258 are joined by a disulfide. One can recognise a TR mART core domain in the interval 62–252 (ALLRESWEAA…LVTLWSYNQT (191 aa)). Residue Tyr99 coordinates NAD(+). Asn101 is a glycosylation site (N-linked (GlcNAc...) asparagine). Residues Arg160 and Gln180 each contribute to the NAD(+) site. Residue Arg160 is part of the active site. Residue Ser183 is part of the active site. A glycan (N-linked (GlcNAc...) asparagine) is linked at Asn196. Ser214 provides a ligand contact to NAD(+). The active site involves Glu221. Asn250 carries an N-linked (GlcNAc...) asparagine glycan.

It belongs to the Arg-specific ADP-ribosyltransferase family.

It is found in the secreted. It carries out the reaction L-arginyl-[protein] + NAD(+) = N(omega)-(ADP-D-ribosyl)-L-arginyl-[protein] + nicotinamide + H(+). The sequence is that of Ecto-ADP-ribosyltransferase 5 (ART5) from Homo sapiens (Human).